The chain runs to 784 residues: Toll-like receptor 2 (784 aa).

Residues 1 to 24 (MLRALWLFWILVAITVLFSKRCSA) form the signal peptide. The Extracellular portion of the chain corresponds to 25-587 (QESLSCDASG…ARPSVLECHQ (563 aa)). C30 and C36 are oxidised to a cystine. 19 LRR repeats span residues 54 to 77 (MKSL…ACAN), 78 to 101 (LQVL…SLGS), 102 to 125 (LEHL…PLSS), 126 to 150 (LKYL…NLTN), 151 to 175 (LQTL…GLTS), 176 to 199 (LNEL…SIRD), 200 to 223 (IHHL…ILSS), 224 to 250 (VRYL…VSSP), 251 to 278 (MKKL…YILE), 279 to 308 (LSEV…ELGK), 309 to 337 (VETV…LLEK), 338 to 361 (VKRI…HLKS), 362 to 388 (LEFL…AWPS), 389 to 414 (LQTL…TLKN), 415 to 437 (LTSL…WPEK), 438 to 457 (MRFL…CIPQ), 458 to 478 (TLEV…FLPR), 479 to 500 (LQEL…LFPV), and 501 to 524 (LLVM…SFPK). N147 carries N-linked (GlcNAc...) asparagine glycosylation. An intrachain disulfide couples C353 to C382. A glycan (N-linked (GlcNAc...) asparagine) is linked at N414. A disulfide bridge links C432 with C454. N442 is a glycosylation site (N-linked (GlcNAc...) asparagine). The 52-residue stretch at 525–576 (LETLEAGDNHFVCSCELLSFTMETPALAQILVDWPDSYLCDSPPRLHGHRLQ) folds into the LRRCT domain. Residues 588-608 (AALVSGVCCALLLLILLVGAL) traverse the membrane as a helical segment. Over 609 to 784 (CHHFHGLWYL…WVNLRTAIKS (176 aa)) the chain is Cytoplasmic. One can recognise a TIR domain in the interval 639 to 782 (VCYDAFVSYS…VFWVNLRTAI (144 aa)). A Glycyl lysine isopeptide (Lys-Gly) (interchain with G-Cter in ubiquitin) cross-link involves residue K754. Positions 761–778 (YLEWPLDEGQQEVFWVNL) match the ATG16L1-binding motif motif.

Belongs to the Toll-like receptor family. As to quaternary structure, interacts with LY96, TLR1 and TLR6 (via extracellular domain). TLR2 seems to exist in heterodimers with either TLR1 or TLR6 before stimulation by the ligand. The heterodimers form bigger oligomers in response to their corresponding ligands as well as further heterotypic associations with other receptors such as CD14 and/or CD36. Binds MYD88 (via TIR domain). Interacts with TICAM1. Interacts with CNPY3. Interacts with ATG16L1. Interacts with non-modified M.tuberculosis protein MPT83. Interacts with PPP1R11. Interacts with TIRAP. (Microbial infection) Interacts with Staphylococcus aureus protein SSL3; this interaction inhibits TLR2-mediated cytokine production. In terms of assembly, (Microbial infection) Interacts with Toxoplasma gondii micronemal protein 1 (MIC1); the interaction promotes activation of bone marrow-derived dendritic cells and macrophages. Interacts with Toxoplasma gondii micronemal protein 4 (MIC4); the interaction promotes activation of bone marrow-derived dendritic cells and macrophages. Post-translationally, ubiquitinated at Lys-754 by PPP1R11, leading to its degradation. Deubiquitinated by USP2. In terms of processing, glycosylation of Asn-442 is critical for secretion of the N-terminal ectodomain of TLR2. In terms of tissue distribution, detected in a macrophage cell line, smooth muscle, lung, spleen, thymus, brain and adipose tissue. Cell surface expression detected in lung alveolar macrophages, dendritic macrophages and at lower levels in lung macrophages (at protein level).

The protein localises to the cell membrane. It is found in the cytoplasmic vesicle. The protein resides in the phagosome membrane. It localises to the membrane raft. In terms of biological role, cooperates with LY96 to mediate the innate immune response to bacterial lipoproteins and other microbial cell wall components. Cooperates with TLR1 or TLR6 to mediate the innate immune response to bacterial lipoproteins or lipopeptides. Acts via MYD88 and TRAF6, leading to NF-kappa-B activation, cytokine secretion and the inflammatory response. May also promote apoptosis in response to lipoproteins. Forms activation clusters composed of several receptors depending on the ligand, these clusters trigger signaling from the cell surface and subsequently are targeted to the Golgi in a lipid-raft dependent pathway. Forms the cluster TLR2:TLR6:CD14:CD36 in response to diacylated lipopeptides and TLR2:TLR1:CD14 in response to triacylated lipopeptides. Recognizes M.tuberculosis major T-antigen EsxA (ESAT-6) which inhibits downstream MYD88-dependent signaling. Acts as the major receptor for M.tuberculosis lipoproteins LprA, LprG, LpqH and PhoS1 (pstS1), in conjunction with TLR1 and for some but not all lipoproteins CD14 and/or CD36. The lipoproteins act as agonists to modulate antigen presenting cell functions in response to the pathogen. Recombinant MPT83 from M.tuberculosis stimulates secretion of cytokines (TNF-alpha, IL-6 and IL-12p40) by mouse macrophage cell lines in a TLR2-dependent fashion, which leads to increased host innate immunity responses against the bacterium. Lung macrophages which express low levels of TLR2 respond poorly to stimulation by M.tuberculosis LpqH. Required for normal uptake of M.tuberculosis, a process that is inhibited by M.tuberculosis LppM. Interacts with TICAM2. (Microbial infection) Mediates activation of bone marrow-derived dendritic cells and macrophages, and production of pro-inflammatory cytokines, such as IL12 (IL12B/IL12A), triggered by Toxoplasma gondii micronemal protein 4 (MIC4) and micronemal protein 1 (MIC1). The sequence is that of Toll-like receptor 2 (Tlr2) from Mus musculus (Mouse).